Consider the following 157-residue polypeptide: Chromophore lyase CpcS/CpeS 1 (157 aa).

This sequence belongs to the CpcS/CpeS biliprotein lyase family.

The protein resides in the plastid. It is found in the organellar chromatophore. In terms of biological role, covalently attaches a chromophore to Cys residue(s) of phycobiliproteins. This Paulinella chromatophora protein is Chromophore lyase CpcS/CpeS 1.